The following is a 138-amino-acid chain: Large ribosomal subunit protein uL16 (138 aa).

It belongs to the universal ribosomal protein uL16 family. In terms of assembly, part of the 50S ribosomal subunit.

In terms of biological role, binds 23S rRNA and is also seen to make contacts with the A and possibly P site tRNAs. This chain is Large ribosomal subunit protein uL16, found in Anaeromyxobacter dehalogenans (strain 2CP-1 / ATCC BAA-258).